The chain runs to 475 residues: Erythroid membrane-associated protein (475 aa).

The signal sequence occupies residues 1-29 (MEMASSAGSWLSGCLIPLVFLRLSVHVSG). The Ig-like V-type domain maps to 30–140 (HAGDAGKFHV…GNLSKEDTVI (111 aa)). Topologically, residues 30-155 (HAGDAGKFHV…PSVGSLSPSA (126 aa)) are extracellular. An intrachain disulfide couples C50 to C126. N132 carries an N-linked (GlcNAc...) asparagine glycan. The helical transmembrane segment at 156-176 (VALAVILPVLVLLIMVCLCLI) threads the bilayer. The Cytoplasmic portion of the chain corresponds to 177–475 (WKQRRAKEKL…ALQELKAPSF (299 aa)). The 199-residue stretch at 220–418 (KLKRAAANSG…LVICSELHKS (199 aa)) folds into the B30.2/SPRY domain. S418 bears the Phosphoserine mark.

This sequence belongs to the immunoglobulin superfamily. BTN/MOG family. Glycosylated. In terms of tissue distribution, expressed in erythroid-enriched bone marrow (at protein level). Highly expressed in bone marrow and to a lower extent in leukocytes, thymus, lymph node and spleen.

Its subcellular location is the cell membrane. The protein localises to the cytoplasm. In terms of biological role, possible role as a cell-adhesion or receptor molecule of erythroid cells. The sequence is that of Erythroid membrane-associated protein (ERMAP) from Homo sapiens (Human).